Here is a 77-residue protein sequence, read N- to C-terminus: Acyl carrier protein (77 aa).

The Carrier domain occupies 2 to 77 (SDIADRVKKI…DAVKFISDAS (76 aa)). O-(pantetheine 4'-phosphoryl)serine is present on serine 37.

This sequence belongs to the acyl carrier protein (ACP) family. Post-translationally, 4'-phosphopantetheine is transferred from CoA to a specific serine of apo-ACP by AcpS. This modification is essential for activity because fatty acids are bound in thioester linkage to the sulfhydryl of the prosthetic group.

It is found in the cytoplasm. Its pathway is lipid metabolism; fatty acid biosynthesis. Its function is as follows. Carrier of the growing fatty acid chain in fatty acid biosynthesis. The chain is Acyl carrier protein from Roseobacter denitrificans (strain ATCC 33942 / OCh 114) (Erythrobacter sp. (strain OCh 114)).